Here is a 117-residue protein sequence, read N- to C-terminus: Probable non-functional immunoglobulin heavy variable 1-38-4 (117 aa).

The N-terminal stretch at 1–19 (MDWNWRILFLVVATTGAHS) is a signal peptide. The interval 20-44 (QVQLVQSWAEVRKSGASVKVSCSFS) is framework-1. One can recognise an Ig-like domain in the interval 20–117 (QVQLVQSWAE…EDMAVYYYAR (98 aa)). The interval 45–52 (GFTITSYG) is complementarity-determining-1. The interval 53 to 69 (IHWVQQSPGQGLEWMGW) is framework-2. Residues 70–77 (INPGNGSP) form a complementarity-determining-2 region. A glycan (N-linked (GlcNAc...) asparagine) is linked at Asn-74. Residues 78-115 (SYAKKFQGRFTMTRDMSTTTAYTDLSSLTSEDMAVYYY) are framework-3. A complementarity-determining-3 region spans residues 116–117 (AR).

As to quaternary structure, most probably, the immunoglobulin is not assembled due to incorrect folding of heavy chain. Immunoglobulins are composed of two identical heavy chains and two identical light chains; disulfide-linked.

It is found in the secreted. It localises to the cell membrane. Probable non-functional open reading frame (ORF) of V region of the variable domain of immunoglobulin heavy chains. Non-functional ORF generally cannot participate in the synthesis of a productive immunoglobulin chain due to altered V-(D)-J or switch recombination and/or splicing site (at mRNA level) and/or conserved amino acid change (protein level). Immunoglobulins, also known as antibodies, are membrane-bound or secreted glycoproteins produced by B lymphocytes. In the recognition phase of humoral immunity, the membrane-bound immunoglobulins serve as receptors which, upon binding of a specific antigen, trigger the clonal expansion and differentiation of B lymphocytes into immunoglobulins-secreting plasma cells. Secreted immunoglobulins mediate the effector phase of humoral immunity, which results in the elimination of bound antigens. The antigen binding site is formed by the variable domain of one heavy chain, together with that of its associated light chain. Thus, each immunoglobulin has two antigen binding sites with remarkable affinity for a particular antigen. The variable domains are assembled by a process called V-(D)-J rearrangement and can then be subjected to somatic hypermutations which, after exposure to antigen and selection, allow affinity maturation for a particular antigen. This Homo sapiens (Human) protein is Probable non-functional immunoglobulin heavy variable 1-38-4.